The following is a 578-amino-acid chain: Zinc finger-containing ubiquitin peptidase 1 (578 aa).

The segment at 2-24 adopts a C2H2-type 1 zinc-finger fold; it reads LSCDICGETVTSEPDMKAHLIVH. The C2H2-type 2; atypical zinc finger occupies 29–52; sequence IVCPFCKLSGVSYDEMCFHIETAH. 2 consecutive C2H2-type zinc fingers follow at residues 154 to 177 and 193 to 215; these read PECP…KTTH and YDCP…VDLH. The interval 226-248 is MIU; that stretch reads DRVQCSGDLQLAHQLQQEEDRKR. Residues 249–274 are zUBD/ZHA; sequence RSEESRQEIEEFQKLQRQYGLDNSGG. Lys262 is modified (N6-acetyllysine). Cys360 (nucleophile) is an active-site residue. The active-site Proton acceptor is His491. Asp512 is an active-site residue.

This sequence belongs to the peptidase C78 family. ZUFSP subfamily. In terms of assembly, interacts with RPA1 and RPA2.

Its subcellular location is the cytoplasm. It localises to the nucleus. It carries out the reaction Thiol-dependent hydrolysis of ester, thioester, amide, peptide and isopeptide bonds formed by the C-terminal Gly of ubiquitin (a 76-residue protein attached to proteins as an intracellular targeting signal).. In terms of biological role, deubiquitinase with endodeubiquitinase activity that specifically interacts with and cleaves 'Lys-63'-linked long polyubiquitin chains. Shows only weak activity against 'Lys-11' and 'Lys-48'-linked chains. Plays an important role in genome stability pathways, functioning to prevent spontaneous DNA damage and also promote cellular survival in response to exogenous DNA damage. Modulates the ubiquitination status of replication protein A (RPA) complex proteins in response to replication stress. The polypeptide is Zinc finger-containing ubiquitin peptidase 1 (Macaca fascicularis (Crab-eating macaque)).